The chain runs to 259 residues: MRVLVSNDDGVDAPGIQILAEALRHGGHEVMVVAPDRDRSGASNSLTLDVPIRTRRIDAQTCAVAGTPTDCVHLALTGMLDCDPDIVVSGINNSANLGDDVIYSGTVSAAMEGRFLGLPAVAVSLVTHNHQAHHYDTAARAAVEIVARLKADPLPADTILNVNVPDLAWSDVLGFEVTRLGNRHRSEPCVPQRDPRGRTVYWIGPAGPEQDAGAGTDFHAVRTGHISITPIHVDLTRYQALETVAGWVGGLTAALDGPA.

The a divalent metal cation site is built by D8, D9, S40, and N92.

Belongs to the SurE nucleotidase family. A divalent metal cation serves as cofactor.

It is found in the cytoplasm. It carries out the reaction a ribonucleoside 5'-phosphate + H2O = a ribonucleoside + phosphate. Nucleotidase that shows phosphatase activity on nucleoside 5'-monophosphates. This Xanthomonas oryzae pv. oryzae (strain MAFF 311018) protein is 5'-nucleotidase SurE.